The sequence spans 200 residues: MYAYIKGTLTELNPTHVVVEASGVGYEIQTPNSYRFQKYMDHEVVVHTSLIVREDAQLLYGFINQEEKDMFLSLIKVTGIGPKSALAILASSSPNDVKIAIENENDAYLTKFPGIGKKTARQIVLDLKGKVQINDVDSSQILNTDTQDHANAPIIKEALLALEALGYSKRELTKVEKSLSKETFDSVDDAVKRGLQLLIA.

Residues 1–63 are domain I; it reads MYAYIKGTLT…EDAQLLYGFI (63 aa). The interval 64–142 is domain II; the sequence is NQEEKDMFLS…INDVDSSQIL (79 aa). Positions 143 to 149 are flexible linker; the sequence is NTDTQDH. A domain III region spans residues 150-200; it reads ANAPIIKEALLALEALGYSKRELTKVEKSLSKETFDSVDDAVKRGLQLLIA.

This sequence belongs to the RuvA family. As to quaternary structure, homotetramer. Forms an RuvA(8)-RuvB(12)-Holliday junction (HJ) complex. HJ DNA is sandwiched between 2 RuvA tetramers; dsDNA enters through RuvA and exits via RuvB. An RuvB hexamer assembles on each DNA strand where it exits the tetramer. Each RuvB hexamer is contacted by two RuvA subunits (via domain III) on 2 adjacent RuvB subunits; this complex drives branch migration. In the full resolvosome a probable DNA-RuvA(4)-RuvB(12)-RuvC(2) complex forms which resolves the HJ.

The protein localises to the cytoplasm. Its function is as follows. The RuvA-RuvB-RuvC complex processes Holliday junction (HJ) DNA during genetic recombination and DNA repair, while the RuvA-RuvB complex plays an important role in the rescue of blocked DNA replication forks via replication fork reversal (RFR). RuvA specifically binds to HJ cruciform DNA, conferring on it an open structure. The RuvB hexamer acts as an ATP-dependent pump, pulling dsDNA into and through the RuvAB complex. HJ branch migration allows RuvC to scan DNA until it finds its consensus sequence, where it cleaves and resolves the cruciform DNA. The protein is Holliday junction branch migration complex subunit RuvA of Staphylococcus saprophyticus subsp. saprophyticus (strain ATCC 15305 / DSM 20229 / NCIMB 8711 / NCTC 7292 / S-41).